Consider the following 150-residue polypeptide: D-aminoacyl-tRNA deacylase (150 aa).

The Gly-cisPro motif, important for rejection of L-amino acids signature appears at 138–139 (GP).

The protein belongs to the DTD family. As to quaternary structure, homodimer.

It is found in the cytoplasm. It catalyses the reaction glycyl-tRNA(Ala) + H2O = tRNA(Ala) + glycine + H(+). The catalysed reaction is a D-aminoacyl-tRNA + H2O = a tRNA + a D-alpha-amino acid + H(+). An aminoacyl-tRNA editing enzyme that deacylates mischarged D-aminoacyl-tRNAs. Also deacylates mischarged glycyl-tRNA(Ala), protecting cells against glycine mischarging by AlaRS. Acts via tRNA-based rather than protein-based catalysis; rejects L-amino acids rather than detecting D-amino acids in the active site. By recycling D-aminoacyl-tRNA to D-amino acids and free tRNA molecules, this enzyme counteracts the toxicity associated with the formation of D-aminoacyl-tRNA entities in vivo and helps enforce protein L-homochirality. The polypeptide is D-aminoacyl-tRNA deacylase (Bacteroides thetaiotaomicron (strain ATCC 29148 / DSM 2079 / JCM 5827 / CCUG 10774 / NCTC 10582 / VPI-5482 / E50)).